We begin with the raw amino-acid sequence, 439 residues long: Trehalose-phosphatase (439 aa).

Mg(2+) contacts are provided by D163 and D165. D165 functions as the Proton donor/acceptor in the catalytic mechanism. Substrate is bound at residue 282-284 (QRK). D373 provides a ligand contact to Mg(2+).

It belongs to the gob-1 trehalose phosphatase family. It depends on Mg(2+) as a cofactor. In terms of tissue distribution, ubiquitously expressed. Strong expression in intestine.

The enzyme catalyses alpha,alpha-trehalose 6-phosphate + H2O = alpha,alpha-trehalose + phosphate. Functionally, catalyzes the hydrolysis of trehalose 6-phosphate to trehalose and phosphate; prevents the accumulation of toxic levels of trehalose 6-phosphate. This chain is Trehalose-phosphatase, found in Caenorhabditis elegans.